The chain runs to 437 residues: Integrase (437 aa).

The Core-binding (CB) domain occupies 73–158; it reads WTVERWLTHW…TARTAFGEAY (86 aa). The 250-residue stretch at 179 to 428 folds into the Tyr recombinase domain; that stretch reads EEVEPLEVED…DSVRNDVADR (250 aa). Catalysis depends on residues Arg214, Lys245, His379, Arg382, and Trp405. Tyr414 serves as the catalytic O-(3'-phospho-DNA)-tyrosine intermediate.

It belongs to the 'phage' integrase family.

Is a recombinase (or integrase), catalyzing the cutting and rejoining of the recombining DNA molecules. The protein is Integrase (int) of Saccharopolyspora erythraea (Streptomyces erythraeus).